The following is a 346-amino-acid chain: Phosphoribosylformylglycinamidine cyclo-ligase (346 aa).

The protein belongs to the AIR synthase family.

It localises to the cytoplasm. It catalyses the reaction 2-formamido-N(1)-(5-O-phospho-beta-D-ribosyl)acetamidine + ATP = 5-amino-1-(5-phospho-beta-D-ribosyl)imidazole + ADP + phosphate + H(+). Its pathway is purine metabolism; IMP biosynthesis via de novo pathway; 5-amino-1-(5-phospho-D-ribosyl)imidazole from N(2)-formyl-N(1)-(5-phospho-D-ribosyl)glycinamide: step 2/2. The chain is Phosphoribosylformylglycinamidine cyclo-ligase from Methylobacillus flagellatus (strain ATCC 51484 / DSM 6875 / VKM B-1610 / KT).